The following is a 340-amino-acid chain: Ketol-acid reductoisomerase (NADP(+)) (340 aa).

One can recognise a KARI N-terminal Rossmann domain in the interval Leu-3 to Thr-183. NADP(+)-binding positions include Phe-26 to Gln-29, Ser-54, and Asp-84 to Gln-87. His-109 is a catalytic residue. Gly-135 serves as a coordination point for NADP(+). The 146-residue stretch at Thr-184 to Ile-329 folds into the KARI C-terminal knotted domain. Residues Asp-192, Glu-196, Glu-228, and Glu-232 each contribute to the Mg(2+) site. Ser-253 contributes to the substrate binding site.

Belongs to the ketol-acid reductoisomerase family. The cofactor is Mg(2+).

The catalysed reaction is (2R)-2,3-dihydroxy-3-methylbutanoate + NADP(+) = (2S)-2-acetolactate + NADPH + H(+). It carries out the reaction (2R,3R)-2,3-dihydroxy-3-methylpentanoate + NADP(+) = (S)-2-ethyl-2-hydroxy-3-oxobutanoate + NADPH + H(+). It participates in amino-acid biosynthesis; L-isoleucine biosynthesis; L-isoleucine from 2-oxobutanoate: step 2/4. Its pathway is amino-acid biosynthesis; L-valine biosynthesis; L-valine from pyruvate: step 2/4. Its function is as follows. Involved in the biosynthesis of branched-chain amino acids (BCAA). Catalyzes an alkyl-migration followed by a ketol-acid reduction of (S)-2-acetolactate (S2AL) to yield (R)-2,3-dihydroxy-isovalerate. In the isomerase reaction, S2AL is rearranged via a Mg-dependent methyl migration to produce 3-hydroxy-3-methyl-2-ketobutyrate (HMKB). In the reductase reaction, this 2-ketoacid undergoes a metal-dependent reduction by NADPH to yield (R)-2,3-dihydroxy-isovalerate. The protein is Ketol-acid reductoisomerase (NADP(+)) of Nitratiruptor sp. (strain SB155-2).